Here is a 278-residue protein sequence, read N- to C-terminus: Inner membrane mitoribosome receptor MBA1, mitochondrial (278 aa).

The transit peptide at 1-33 directs the protein to the mitochondrion; that stretch reads MSVLRSTCLFFPPRSLLISFNKRRLFSTSRLIL.

As to quaternary structure, interacts with OXA1 and MDM38. Binds to mitoribosomes in order to recruit them to the mitochondrial inner membrane.

The protein localises to the mitochondrion inner membrane. Its function is as follows. Mitochondrial inner membrane-associated mitoribosome receptor that spatially aligns the mitoribosome exit tunnel with the membrane insertion machinery and allows cotranslational protein membrane insertion. This chain is Inner membrane mitoribosome receptor MBA1, mitochondrial, found in Saccharomyces cerevisiae (strain ATCC 204508 / S288c) (Baker's yeast).